A 623-amino-acid chain; its full sequence is Membralin-like protein At1g60995 (623 aa).

A helical transmembrane segment spans residues G24 to M44. Residues S99–T119 form a disordered region. The next 4 helical transmembrane spans lie at G315–L335, I363–F383, L392–V412, and F424–S444. Disordered regions lie at residues N506 to A567 and E602 to D623. The segment covering P514–F531 has biased composition (polar residues).

The protein belongs to the membralin family.

It localises to the membrane. The protein is Membralin-like protein At1g60995 of Arabidopsis thaliana (Mouse-ear cress).